The sequence spans 434 residues: Serine hydroxymethyltransferase 2 (434 aa).

(6S)-5,6,7,8-tetrahydrofolate contacts are provided by residues L136 and 140–142 (GHL). At K245 the chain carries N6-(pyridoxal phosphate)lysine.

This sequence belongs to the SHMT family. In terms of assembly, homodimer. Pyridoxal 5'-phosphate is required as a cofactor.

It localises to the cytoplasm. It carries out the reaction (6R)-5,10-methylene-5,6,7,8-tetrahydrofolate + glycine + H2O = (6S)-5,6,7,8-tetrahydrofolate + L-serine. It participates in one-carbon metabolism; tetrahydrofolate interconversion. Its pathway is amino-acid biosynthesis; glycine biosynthesis; glycine from L-serine: step 1/1. Catalyzes the reversible interconversion of serine and glycine with tetrahydrofolate (THF) serving as the one-carbon carrier. This reaction serves as the major source of one-carbon groups required for the biosynthesis of purines, thymidylate, methionine, and other important biomolecules. Also exhibits THF-independent aldolase activity toward beta-hydroxyamino acids, producing glycine and aldehydes, via a retro-aldol mechanism. In Rhodopseudomonas palustris (strain ATCC BAA-98 / CGA009), this protein is Serine hydroxymethyltransferase 2.